Reading from the N-terminus, the 508-residue chain is PTS system mannitol-specific EIICB component (508 aa).

Over 1–30 (MSQTETQENKGLGRKVQAFGSFLSSMIMPN) the chain is Cytoplasmic. The PTS EIIC type-2 domain maps to 19–351 (FGSFLSSMIM…LKFTKEPEED (333 aa)). Residues 31–52 (IGAFIAWGFIAAIFIDGGWWPN) form a helical membrane-spanning segment. Residues 53 to 56 (KDLS) lie on the Extracellular side of the membrane. Residues 57–77 (ELAGPMISYLIPLLIAYSGGR) traverse the membrane as a helical segment. Topologically, residues 78 to 141 (LIHEMRGGII…QGFEMLFNNF (64 aa)) are cytoplasmic. A helical membrane pass occupies residues 142–163 (SAGILGFIMTIVGFKILAPIME). Residues 164 to 172 (FIMHILSLA) lie on the Extracellular side of the membrane. A helical membrane pass occupies residues 173–193 (VEALVHAHLLPLVSIIVEPAK). Residues 194–280 (IVFLNNAINH…VLMRPLLFIA (87 aa)) lie on the Cytoplasmic side of the membrane. The helical transmembrane segment at 281 to 300 (VILGGMTGVATYSLLDFGFK) threads the bilayer. At 301-320 (SPASPGSFIVYMLNAPKGEF) the chain is on the extracellular side. A helical membrane pass occupies residues 321–342 (LHMVLGVLLAAIVSFIVAALIL). Topologically, residues 343–508 (KFTKEPEEDL…RYDELLENLK (166 aa)) are cytoplasmic. Residues 355–400 (ATEKMEASKGKKSSVSSKLKGNEDNNATSTTASTSTSENNEEQSEE) form a disordered region. Positions 367–392 (SSVSSKLKGNEDNNATSTTASTSTSE) are enriched in low complexity. The 89-residue stretch at 420-508 (NHVIFACDAG…RYDELLENLK (89 aa)) folds into the PTS EIIB type-2 domain. Cys426 (phosphocysteine intermediate; for EIIB activity) is an active-site residue. Cys426 carries the post-translational modification Phosphocysteine; by EIIA.

As to quaternary structure, homodimer.

Its subcellular location is the cell membrane. It carries out the reaction D-mannitol(out) + N(pros)-phospho-L-histidyl-[protein] = D-mannitol 1-phosphate(in) + L-histidyl-[protein]. In terms of biological role, the phosphoenolpyruvate-dependent sugar phosphotransferase system (sugar PTS), a major carbohydrate active transport system, catalyzes the phosphorylation of incoming sugar substrates concomitantly with their translocation across the cell membrane. The enzyme II CmtAB PTS system is involved in D-mannitol transport. This chain is PTS system mannitol-specific EIICB component (mtlA), found in Staphylococcus saprophyticus subsp. saprophyticus (strain ATCC 15305 / DSM 20229 / NCIMB 8711 / NCTC 7292 / S-41).